The following is a 166-amino-acid chain: NADH-quinone oxidoreductase subunit C (166 aa).

The protein belongs to the complex I 30 kDa subunit family. As to quaternary structure, NDH-1 is composed of 14 different subunits. Subunits NuoB, C, D, E, F, and G constitute the peripheral sector of the complex.

It is found in the cell inner membrane. It carries out the reaction a quinone + NADH + 5 H(+)(in) = a quinol + NAD(+) + 4 H(+)(out). Its function is as follows. NDH-1 shuttles electrons from NADH, via FMN and iron-sulfur (Fe-S) centers, to quinones in the respiratory chain. The immediate electron acceptor for the enzyme in this species is believed to be a menaquinone. Couples the redox reaction to proton translocation (for every two electrons transferred, four hydrogen ions are translocated across the cytoplasmic membrane), and thus conserves the redox energy in a proton gradient. This chain is NADH-quinone oxidoreductase subunit C, found in Chlorobium phaeobacteroides (strain DSM 266 / SMG 266 / 2430).